The chain runs to 361 residues: Homocitrate synthase (361 aa).

A Pyruvate carboxyltransferase domain is found at 1–251 (MVLDSTLREG…KYRLDLLYRV (251 aa)). R8 is a binding site for 2-oxoglutarate. Position 9 (E9) interacts with Mg(2+). 2-oxoglutarate contacts are provided by H68, R128, and T162. H188 and H190 together coordinate Mg(2+). H282 functions as the Proton acceptor in the catalytic mechanism.

It belongs to the alpha-IPM synthase/homocitrate synthase family. Homocitrate synthase LYS20/LYS21 subfamily. Mg(2+) is required as a cofactor. Requires Mn(2+) as cofactor.

The enzyme catalyses acetyl-CoA + 2-oxoglutarate + H2O = (2R)-homocitrate + CoA + H(+). The protein operates within amino-acid biosynthesis; L-lysine biosynthesis via AAA pathway; L-alpha-aminoadipate from 2-oxoglutarate: step 1/5. Its function is as follows. Catalyzes the aldol-type condensation of 2-oxoglutarate with acetyl-CoA to yield homocitrate. Carries out the first step of the alpha-aminoadipate (AAA) lysine biosynthesis pathway. The polypeptide is Homocitrate synthase (Pyrococcus abyssi (strain GE5 / Orsay)).